The primary structure comprises 47 residues: PhoP/PhoQ regulator MgrB (47 aa).

The helical transmembrane segment at 6-26 (WVVLGIVVVVCLLLWAQVFNI) threads the bilayer.

The protein belongs to the MgrB family. As to quaternary structure, may form homooligomers. Probably interacts with the periplasmic domain of PhoQ.

The protein localises to the cell inner membrane. In terms of biological role, phoP-regulated transcription is redox-sensitive, being activated when the periplasm becomes more reducing. MgrB acts between DsbA/DsbB and PhoP/PhoQ in this pathway. Represses PhoP/PhoQ signaling, possibly by binding to the periplasmic domain of PhoQ, altering its activity and that of downstream effector PhoP. This is PhoP/PhoQ regulator MgrB from Salmonella gallinarum (strain 287/91 / NCTC 13346).